Here is a 480-residue protein sequence, read N- to C-terminus: Endothelial transcription factor GATA-2 (480 aa).

The residue at position 73 (Ser-73) is a Phosphoserine. The residue at position 86 (Arg-86) is an Asymmetric dimethylarginine. Residues Ser-166–Lys-208 form a disordered region. Residues Pro-183 to Ser-201 are compositionally biased toward low complexity. The residue at position 192 (Ser-192) is a Phosphoserine. 2 GATA-type zinc fingers span residues Cys-295–Cys-319 and Cys-349–Cys-373. Lys-389 is covalently cross-linked (Glycyl lysine isopeptide (Lys-Gly) (interchain with G-Cter in SUMO2)). The tract at residues Thr-457–Gly-480 is disordered.

As to quaternary structure, interacts with BRD3. Interacts with AR and CCAR1. Interacts with MDFIC.

It localises to the nucleus. Functionally, transcriptional activator which regulates endothelin-1 gene expression in endothelial cells. Binds to the consensus sequence 5'-AGATAG-3'. Plays an important role in the regulation of phagocytosis in alveolar macrophages, particularly during P.carinii infection. This Rattus norvegicus (Rat) protein is Endothelial transcription factor GATA-2.